The chain runs to 353 residues: Photosystem II protein D1 (353 aa).

Thr-2 bears the N-acetylthreonine mark. Thr-2 carries the post-translational modification Phosphothreonine. 3 helical membrane-spanning segments follow: residues 29–46, 118–133, and 142–156; these read YIGW…TATS, HFLL…EWEL, and WIAV…AATA. Residue His-118 participates in chlorophyll a binding. A pheophytin a-binding site is contributed by Tyr-126. Residues Asp-170 and Glu-189 each contribute to the [CaMn4O5] cluster site. A helical membrane pass occupies residues 197 to 218; that stretch reads FHMLGVAGVFGGSLFSAMHGSL. Residue His-198 participates in chlorophyll a binding. Residues His-215 and 264–265 each bind a quinone; that span reads SF. His-215 provides a ligand contact to Fe cation. His-272 contributes to the Fe cation binding site. The chain crosses the membrane as a helical span at residues 274-288; that stretch reads FLAAWPVIGIWFTAL. [CaMn4O5] cluster is bound by residues His-332, Glu-333, Asp-342, and Ala-344. The propeptide occupies 345 to 353; the sequence is AVEAPSTNG.

Belongs to the reaction center PufL/M/PsbA/D family. In terms of assembly, PSII is composed of 1 copy each of membrane proteins PsbA, PsbB, PsbC, PsbD, PsbE, PsbF, PsbH, PsbI, PsbJ, PsbK, PsbL, PsbM, PsbT, PsbX, PsbY, PsbZ, Psb30/Ycf12, at least 3 peripheral proteins of the oxygen-evolving complex and a large number of cofactors. It forms dimeric complexes. It depends on The D1/D2 heterodimer binds P680, chlorophylls that are the primary electron donor of PSII, and subsequent electron acceptors. It shares a non-heme iron and each subunit binds pheophytin, quinone, additional chlorophylls, carotenoids and lipids. D1 provides most of the ligands for the Mn4-Ca-O5 cluster of the oxygen-evolving complex (OEC). There is also a Cl(-1) ion associated with D1 and D2, which is required for oxygen evolution. The PSII complex binds additional chlorophylls, carotenoids and specific lipids. as a cofactor. Tyr-161 forms a radical intermediate that is referred to as redox-active TyrZ, YZ or Y-Z. In terms of processing, C-terminally processed by CTPA; processing is essential to allow assembly of the oxygen-evolving complex and thus photosynthetic growth.

The protein resides in the plastid. It localises to the chloroplast thylakoid membrane. It carries out the reaction 2 a plastoquinone + 4 hnu + 2 H2O = 2 a plastoquinol + O2. Its function is as follows. Photosystem II (PSII) is a light-driven water:plastoquinone oxidoreductase that uses light energy to abstract electrons from H(2)O, generating O(2) and a proton gradient subsequently used for ATP formation. It consists of a core antenna complex that captures photons, and an electron transfer chain that converts photonic excitation into a charge separation. The D1/D2 (PsbA/PsbD) reaction center heterodimer binds P680, the primary electron donor of PSII as well as several subsequent electron acceptors. In Buxus microphylla (Littleleaf boxwood), this protein is Photosystem II protein D1.